A 277-amino-acid polypeptide reads, in one-letter code: Small ribosomal subunit protein uS2 (277 aa).

A disordered region spans residues 255-277 (AVATTDEASAPSAAATETTTEEG). Residues 257-277 (ATTDEASAPSAAATETTTEEG) show a composition bias toward low complexity.

This sequence belongs to the universal ribosomal protein uS2 family.

This Mycobacteroides abscessus (strain ATCC 19977 / DSM 44196 / CCUG 20993 / CIP 104536 / JCM 13569 / NCTC 13031 / TMC 1543 / L948) (Mycobacterium abscessus) protein is Small ribosomal subunit protein uS2.